A 388-amino-acid polypeptide reads, in one-letter code: Succinate--CoA ligase [ADP-forming] subunit beta (388 aa).

Positions 9-244 (KQLFAEFGLP…PSQEDEREAH (236 aa)) constitute an ATP-grasp domain. Residues lysine 46, 53 to 55 (GRG), glutamate 99, serine 102, and glutamate 107 contribute to the ATP site. The Mg(2+) site is built by asparagine 199 and aspartate 213. Substrate contacts are provided by residues asparagine 264 and 321-323 (GIV).

Belongs to the succinate/malate CoA ligase beta subunit family. Heterotetramer of two alpha and two beta subunits. Requires Mg(2+) as cofactor.

It catalyses the reaction succinate + ATP + CoA = succinyl-CoA + ADP + phosphate. The enzyme catalyses GTP + succinate + CoA = succinyl-CoA + GDP + phosphate. It functions in the pathway carbohydrate metabolism; tricarboxylic acid cycle; succinate from succinyl-CoA (ligase route): step 1/1. Succinyl-CoA synthetase functions in the citric acid cycle (TCA), coupling the hydrolysis of succinyl-CoA to the synthesis of either ATP or GTP and thus represents the only step of substrate-level phosphorylation in the TCA. The beta subunit provides nucleotide specificity of the enzyme and binds the substrate succinate, while the binding sites for coenzyme A and phosphate are found in the alpha subunit. This Vibrio parahaemolyticus serotype O3:K6 (strain RIMD 2210633) protein is Succinate--CoA ligase [ADP-forming] subunit beta.